The chain runs to 435 residues: Methylenetetrahydrofolate--tRNA-(uracil-5-)-methyltransferase TrmFO (435 aa).

Position 9 to 14 (9 to 14 (GAGLAG)) interacts with FAD.

Belongs to the MnmG family. TrmFO subfamily. FAD is required as a cofactor.

The protein localises to the cytoplasm. The enzyme catalyses uridine(54) in tRNA + (6R)-5,10-methylene-5,6,7,8-tetrahydrofolate + NADH + H(+) = 5-methyluridine(54) in tRNA + (6S)-5,6,7,8-tetrahydrofolate + NAD(+). It carries out the reaction uridine(54) in tRNA + (6R)-5,10-methylene-5,6,7,8-tetrahydrofolate + NADPH + H(+) = 5-methyluridine(54) in tRNA + (6S)-5,6,7,8-tetrahydrofolate + NADP(+). Functionally, catalyzes the folate-dependent formation of 5-methyl-uridine at position 54 (M-5-U54) in all tRNAs. This Staphylococcus aureus (strain MRSA252) protein is Methylenetetrahydrofolate--tRNA-(uracil-5-)-methyltransferase TrmFO.